Consider the following 130-residue polypeptide: Small ribosomal subunit protein uS9 (130 aa).

Belongs to the universal ribosomal protein uS9 family.

The polypeptide is Small ribosomal subunit protein uS9 (Shewanella sediminis (strain HAW-EB3)).